Reading from the N-terminus, the 337-residue chain is Ketol-acid reductoisomerase (NADP(+)) (337 aa).

A KARI N-terminal Rossmann domain is found at 1–180 (MQVYYDKDAD…GGTKGGVIET (180 aa)). NADP(+)-binding positions include 24–27 (YGSQ), Arg47, and Ser51. His106 is a catalytic residue. Position 132 (Gly132) interacts with NADP(+). Positions 181–326 (TFREETETDL…AQLRAMMPWI (146 aa)) constitute a KARI C-terminal knotted domain. Mg(2+) contacts are provided by Asp189, Glu193, Glu225, and Glu229. Ser250 contacts substrate.

It belongs to the ketol-acid reductoisomerase family. Requires Mg(2+) as cofactor.

It carries out the reaction (2R)-2,3-dihydroxy-3-methylbutanoate + NADP(+) = (2S)-2-acetolactate + NADPH + H(+). It catalyses the reaction (2R,3R)-2,3-dihydroxy-3-methylpentanoate + NADP(+) = (S)-2-ethyl-2-hydroxy-3-oxobutanoate + NADPH + H(+). Its pathway is amino-acid biosynthesis; L-isoleucine biosynthesis; L-isoleucine from 2-oxobutanoate: step 2/4. It participates in amino-acid biosynthesis; L-valine biosynthesis; L-valine from pyruvate: step 2/4. Involved in the biosynthesis of branched-chain amino acids (BCAA). Catalyzes an alkyl-migration followed by a ketol-acid reduction of (S)-2-acetolactate (S2AL) to yield (R)-2,3-dihydroxy-isovalerate. In the isomerase reaction, S2AL is rearranged via a Mg-dependent methyl migration to produce 3-hydroxy-3-methyl-2-ketobutyrate (HMKB). In the reductase reaction, this 2-ketoacid undergoes a metal-dependent reduction by NADPH to yield (R)-2,3-dihydroxy-isovalerate. The chain is Ketol-acid reductoisomerase (NADP(+)) from Neisseria meningitidis serogroup C (strain 053442).